Reading from the N-terminus, the 1230-residue chain is Soluble starch synthase 3, chloroplastic/amyloplastic (1230 aa).

A chloroplast-targeting transit peptide spans 1-60 (MDVPFPLHRSLSCTSVSNAITHLKIKPILGFVSHGTTSLSVQSSSWRKDGMVTGVSFSIC). The disordered stretch occupies residues 66–189 (RRRRKVSTPR…KDAVKLNKSK (124 aa)). Over residues 124–145 (VEARVETSDDDTKGVVRDHKFL) the composition is skewed to basic and acidic residues. Polar residues predominate over residues 152–170 (NGSTKSISMSPVRVSSQFV). Over residues 177–189 (GDDKDAVKLNKSK) the composition is skewed to basic and acidic residues. Residue lysine 794 participates in ADP-alpha-D-glucose binding.

The protein belongs to the glycosyltransferase 1 family. Bacterial/plant glycogen synthase subfamily. As to expression, tuber, sink and source leaves.

It is found in the plastid. The protein resides in the chloroplast. It localises to the amyloplast. It carries out the reaction [(1-&gt;4)-alpha-D-glucosyl](n) + ADP-alpha-D-glucose = [(1-&gt;4)-alpha-D-glucosyl](n+1) + ADP + H(+). It functions in the pathway glycan biosynthesis; starch biosynthesis. In terms of biological role, may account for most of the soluble starch synthase activity in the tubers. Contributes only a tiny percentage of the granule-bound activity, but may also contribute to the deposition of transient starch in chloroplasts of leaves. The chain is Soluble starch synthase 3, chloroplastic/amyloplastic (SS3) from Solanum tuberosum (Potato).